Reading from the N-terminus, the 200-residue chain is Recombination protein RecR (200 aa).

The segment at 57-72 adopts a C4-type zinc-finger fold; sequence CQECRTFTEQDVCHIC. A Toprim domain is found at 81-176; sequence GQLCVVESPA…TASRIAHGVP (96 aa).

It belongs to the RecR family.

In terms of biological role, may play a role in DNA repair. It seems to be involved in an RecBC-independent recombinational process of DNA repair. It may act with RecF and RecO. In Vibrio cholerae serotype O1 (strain ATCC 39541 / Classical Ogawa 395 / O395), this protein is Recombination protein RecR.